Reading from the N-terminus, the 149-residue chain is Cytochrome c-556 (149 aa).

The first 20 residues, Met1–Ala20, serve as a signal peptide directing secretion. 4 residues coordinate heme c: Met32, Cys137, Cys140, and His141.

Monomer. Binds 1 heme c group covalently per subunit.

Functionally, low-spin monoheme cytochrome c. This chain is Cytochrome c-556, found in Rhodopseudomonas palustris (strain ATCC BAA-98 / CGA009).